The following is a 490-amino-acid chain: N-succinylglutamate 5-semialdehyde dehydrogenase (490 aa).

223–228 contributes to the NAD(+) binding site; sequence GSAGTG. Active-site residues include E246 and C280.

This sequence belongs to the aldehyde dehydrogenase family. AstD subfamily.

It carries out the reaction N-succinyl-L-glutamate 5-semialdehyde + NAD(+) + H2O = N-succinyl-L-glutamate + NADH + 2 H(+). The protein operates within amino-acid degradation; L-arginine degradation via AST pathway; L-glutamate and succinate from L-arginine: step 4/5. Its function is as follows. Catalyzes the NAD-dependent reduction of succinylglutamate semialdehyde into succinylglutamate. This is N-succinylglutamate 5-semialdehyde dehydrogenase from Serratia proteamaculans (strain 568).